Reading from the N-terminus, the 320-residue chain is Lipoyl synthase (320 aa).

Cysteine 67, cysteine 72, cysteine 78, cysteine 93, cysteine 97, cysteine 100, and serine 307 together coordinate [4Fe-4S] cluster. The region spanning 79–296 (FNHGTATFMI…REKANEMGFE (218 aa)) is the Radical SAM core domain.

It belongs to the radical SAM superfamily. Lipoyl synthase family. [4Fe-4S] cluster serves as cofactor.

Its subcellular location is the cytoplasm. It carries out the reaction [[Fe-S] cluster scaffold protein carrying a second [4Fe-4S](2+) cluster] + N(6)-octanoyl-L-lysyl-[protein] + 2 oxidized [2Fe-2S]-[ferredoxin] + 2 S-adenosyl-L-methionine + 4 H(+) = [[Fe-S] cluster scaffold protein] + N(6)-[(R)-dihydrolipoyl]-L-lysyl-[protein] + 4 Fe(3+) + 2 hydrogen sulfide + 2 5'-deoxyadenosine + 2 L-methionine + 2 reduced [2Fe-2S]-[ferredoxin]. The protein operates within protein modification; protein lipoylation via endogenous pathway; protein N(6)-(lipoyl)lysine from octanoyl-[acyl-carrier-protein]: step 2/2. Functionally, catalyzes the radical-mediated insertion of two sulfur atoms into the C-6 and C-8 positions of the octanoyl moiety bound to the lipoyl domains of lipoate-dependent enzymes, thereby converting the octanoylated domains into lipoylated derivatives. The polypeptide is Lipoyl synthase (Glaesserella parasuis serovar 5 (strain SH0165) (Haemophilus parasuis)).